The sequence spans 172 residues: Adenine phosphoribosyltransferase (172 aa).

It belongs to the purine/pyrimidine phosphoribosyltransferase family. Homodimer.

Its subcellular location is the cytoplasm. It catalyses the reaction AMP + diphosphate = 5-phospho-alpha-D-ribose 1-diphosphate + adenine. It participates in purine metabolism; AMP biosynthesis via salvage pathway; AMP from adenine: step 1/1. Catalyzes a salvage reaction resulting in the formation of AMP, that is energically less costly than de novo synthesis. This is Adenine phosphoribosyltransferase from Methanococcus maripaludis (strain DSM 14266 / JCM 13030 / NBRC 101832 / S2 / LL).